A 105-amino-acid polypeptide reads, in one-letter code: MNNIPPIPQLGIYVSKIDPTLRITVTDVDIVDGEDDSPDDELFYLVHWIEGEDESDMTAMGFELDPVEWQAFVESEQLVFERESVHGFNPRKFKLGKDSGFSHED.

The sequence is that of Protein ORFg in retron Ec67 from Escherichia coli.